Consider the following 190-residue polypeptide: Photosynthetic NDH subunit of lumenal location 2, chloroplastic (190 aa).

Residues 1–31 (MSSFTTTNTPPPYLLRKIYHRRVNQPFSVVC) constitute a chloroplast transit peptide. A thylakoid-targeting transit peptide spans 32–68 (CTGEPQQDIFTRRRTLTSLITFTVIGGATSSALAQEK). Coiled coils occupy residues 87–107 (EDAA…REML) and 139–159 (ESRR…MSEL).

Belongs to the PsbQ family. As to quaternary structure, part of the chloroplast NDH complex, composed of a mixture of chloroplast and nucleus encoded subunits. Component of the NDH lumenal subcomplex, at least composed of PnsL1, PnsL2, PnsL3, PnsL4 and PnsL5.

The protein resides in the plastid. The protein localises to the chloroplast thylakoid membrane. NDH shuttles electrons from NAD(P)H:plastoquinone, via FMN and iron-sulfur (Fe-S) centers, to quinones in the photosynthetic chain and possibly in a chloroplast respiratory chain. The immediate electron acceptor for the enzyme in this species is believed to be plastoquinone. Couples the redox reaction to proton translocation, and thus conserves the redox energy in a proton gradient. Required for both formation and activity of the chloroplast NAD(P)H dehydrogenase (NDH) complex. The polypeptide is Photosynthetic NDH subunit of lumenal location 2, chloroplastic (Arabidopsis thaliana (Mouse-ear cress)).